A 384-amino-acid chain; its full sequence is Urea transporter 1 (384 aa).

E39 bears the Phosphoserine mark. The next 5 membrane-spanning stretches (helical) occupy residues 61-81 (ISQV…VGLL), 85-105 (PWWA…ALLL), 111-131 (AIAA…MAVF), 138-158 (FWWL…FSSA), and 168-188 (LPVF…ATGH). N-linked (GlcNAc...) asparagine glycosylation is present at N206. 4 helical membrane-spanning segments follow: residues 250–270 (LMCL…LSLA), 276–296 (IYFG…GGMF), 305–325 (LLAL…AHLM), and 327–347 (VVHL…FLLL).

The protein belongs to the urea transporter family. Homotrimer; each subunit contains a pore through which urea permeates. Identified in a complex with STOM. Post-translationally, N-glycosylated in red blood cells, as well as in most non-erythroid tissues, except in the gastrocnemius muscle and in the gastrointestinal tract, including liver, colon and stomach. Expressed in brain, kidney, heart, liver, lung, skeletal muscle, spleen, testis, ureter and urinary bladder (at protein level). Along the gastrointestinal tract, detected in colon, jejunum and stomach (at protein level). In the kidney, expressed in some microvessels of the inner and outer medulla, but not all (at protein level). Not detected in the cortex (at protein level). Detected in the urothelium all along the urinary tract, including the papilla surface, the ureter, the bladder and the urethra (at protein level). In the brain, expressed at the border of the corpus callosum and striatum in astrocytic cellular processes surrounding blood microvessels (at protein level). Detected in erythrocytes (at protein level).

The protein resides in the cell membrane. The protein localises to the basolateral cell membrane. It carries out the reaction urea(in) = urea(out). In terms of biological role, mediates the transport of urea driven by a concentration gradient across the cell membranes of erythrocytes and the renal inner medullary collecting duct which is critical to the urinary concentrating mechanism. Facilitates water transport in erythrocytes. The protein is Urea transporter 1 (Slc14a1) of Mus musculus (Mouse).